Consider the following 233-residue polypeptide: Small ribosomal subunit protein uS3 (233 aa).

Positions 39–107 (VRQFLASELT…PSQINIAEVR (69 aa)) constitute a KH type-2 domain.

Belongs to the universal ribosomal protein uS3 family. Part of the 30S ribosomal subunit. Forms a tight complex with proteins S10 and S14.

In terms of biological role, binds the lower part of the 30S subunit head. Binds mRNA in the 70S ribosome, positioning it for translation. The chain is Small ribosomal subunit protein uS3 from Baumannia cicadellinicola subsp. Homalodisca coagulata.